Consider the following 399-residue polypeptide: Acetylornithine aminotransferase (399 aa).

Residues 102–103 (GA) and phenylalanine 138 each bind pyridoxal 5'-phosphate. Arginine 141 contributes to the N(2)-acetyl-L-ornithine binding site. Residue 223 to 226 (DEVQ) participates in pyridoxal 5'-phosphate binding. Lysine 252 bears the N6-(pyridoxal phosphate)lysine mark. Threonine 280 serves as a coordination point for pyridoxal 5'-phosphate.

It belongs to the class-III pyridoxal-phosphate-dependent aminotransferase family. ArgD subfamily. In terms of assembly, homodimer. The cofactor is pyridoxal 5'-phosphate.

The protein resides in the cytoplasm. The catalysed reaction is N(2)-acetyl-L-ornithine + 2-oxoglutarate = N-acetyl-L-glutamate 5-semialdehyde + L-glutamate. It participates in amino-acid biosynthesis; L-arginine biosynthesis; N(2)-acetyl-L-ornithine from L-glutamate: step 4/4. The sequence is that of Acetylornithine aminotransferase from Ralstonia nicotianae (strain ATCC BAA-1114 / GMI1000) (Ralstonia solanacearum).